The primary structure comprises 199 residues: Recombination protein RecR (199 aa).

The C4-type zinc-finger motif lies at 57–72 (CEICGNMDTKNICHIC). A Toprim domain is found at 80–175 (STIAIVETVA…KISRLASGIP (96 aa)).

Belongs to the RecR family.

Functionally, may play a role in DNA repair. It seems to be involved in an RecBC-independent recombinational process of DNA repair. It may act with RecF and RecO. This Rickettsia typhi (strain ATCC VR-144 / Wilmington) protein is Recombination protein RecR.